Reading from the N-terminus, the 312-residue chain is Malate dehydrogenase (312 aa).

Residues 7–13 and Asp-34 each bind NAD(+); that span reads GAAGGIG. Substrate is bound by residues Arg-81 and Arg-87. NAD(+) contacts are provided by residues Asn-94 and 117–119; that span reads ITN. Residues Asn-119 and Arg-153 each coordinate substrate. Residue His-177 is the Proton acceptor of the active site. Met-227 contacts NAD(+).

The protein belongs to the LDH/MDH superfamily. MDH type 1 family. As to quaternary structure, homodimer.

The enzyme catalyses (S)-malate + NAD(+) = oxaloacetate + NADH + H(+). Catalyzes the reversible oxidation of malate to oxaloacetate. This Escherichia coli (strain ATCC 8739 / DSM 1576 / NBRC 3972 / NCIMB 8545 / WDCM 00012 / Crooks) protein is Malate dehydrogenase.